The sequence spans 262 residues: Aminoglycoside (3'') (9) adenylyltransferase (262 aa).

Residues 1–157 (MTLSIPPSIQ…ERAERLFTPA (157 aa)) form an adenylyltransferase domain region. ATP-binding residues include serine 36, serine 46, and aspartate 47. Residues aspartate 47, aspartate 49, and glutamate 87 each coordinate Mg(2+). Glutamate 87 functions as the Proton acceptor in the catalytic mechanism. ATP is bound at residue aspartate 130. A helical domain region spans residues 158 to 262 (PAAQLLKALR…AKAHIPTQFT (105 aa)). Streptomycin-binding positions include 173-178 (WQSTAD) and histidine 185. 2 residues coordinate ATP: lysine 205 and tyrosine 231.

Monomer.

It carries out the reaction streptomycin + ATP = 3''-O-adenylylstreptomycin + diphosphate. It catalyses the reaction spectinomycin + ATP = 9-O-adenylylspectinomycin + diphosphate. Mediates bacterial resistance to the antibiotics streptomycin and spectinomycin, does not confer resistance to kanamycin. Binds ATP first, then antibiotic. This Salmonella typhimurium (strain LT2 / SGSC1412 / ATCC 700720) protein is Aminoglycoside (3'') (9) adenylyltransferase (aadA).